Here is a 366-residue protein sequence, read N- to C-terminus: UDP-N-acetylglucosamine 2-epimerase (366 aa).

The active site involves histidine 207.

It belongs to the UDP-N-acetylglucosamine 2-epimerase family. As to quaternary structure, homodimer.

It is found in the cytoplasm. The catalysed reaction is UDP-N-acetyl-alpha-D-glucosamine = UDP-N-acetyl-alpha-D-mannosamine. Functionally, catalyzes the reversible epimerization at C-2 of UDP-N-acetylglucosamine (UDP-GlcNAc) to produce UDP-N-acetylmannosamine (UDP-ManNAc), the activated donor of ManNAc residues. This is UDP-N-acetylglucosamine 2-epimerase (wecB) from Methanocaldococcus jannaschii (strain ATCC 43067 / DSM 2661 / JAL-1 / JCM 10045 / NBRC 100440) (Methanococcus jannaschii).